A 503-amino-acid chain; its full sequence is Maturase K (503 aa).

This sequence belongs to the intron maturase 2 family. MatK subfamily.

The protein localises to the plastid. The protein resides in the chloroplast. Its function is as follows. Usually encoded in the trnK tRNA gene intron. Probably assists in splicing its own and other chloroplast group II introns. This chain is Maturase K, found in Callistemon polandii (Gold-tipped bottlebrush).